Reading from the N-terminus, the 153-residue chain is Succinate dehydrogenase assembly factor 2, mitochondrial (153 aa).

The protein belongs to the SDHAF2 family. In terms of assembly, interacts with the flavoprotein subunit within the SDH catalytic dimer.

It is found in the mitochondrion matrix. Its function is as follows. Plays an essential role in the assembly of succinate dehydrogenase (SDH), an enzyme complex (also referred to as respiratory complex II) that is a component of both the tricarboxylic acid (TCA) cycle and the mitochondrial electron transport chain, and which couples the oxidation of succinate to fumarate with the reduction of ubiquinone (coenzyme Q) to ubiquinol. Required for flavinylation (covalent attachment of FAD) of the flavoprotein subunit of the SDH catalytic dimer. In Candida glabrata (strain ATCC 2001 / BCRC 20586 / JCM 3761 / NBRC 0622 / NRRL Y-65 / CBS 138) (Yeast), this protein is Succinate dehydrogenase assembly factor 2, mitochondrial.